Here is a 127-residue protein sequence, read N- to C-terminus: Small ribosomal subunit protein uS11 (127 aa).

The protein belongs to the universal ribosomal protein uS11 family. Part of the 30S ribosomal subunit. Interacts with proteins S7 and S18. Binds to IF-3.

In terms of biological role, located on the platform of the 30S subunit, it bridges several disparate RNA helices of the 16S rRNA. Forms part of the Shine-Dalgarno cleft in the 70S ribosome. The polypeptide is Small ribosomal subunit protein uS11 (Streptococcus pyogenes serotype M49 (strain NZ131)).